Consider the following 199-residue polypeptide: Large ribosomal subunit protein bL25 (199 aa).

This sequence belongs to the bacterial ribosomal protein bL25 family. CTC subfamily. In terms of assembly, part of the 50S ribosomal subunit; part of the 5S rRNA/L5/L18/L25 subcomplex. Contacts the 5S rRNA. Binds to the 5S rRNA independently of L5 and L18.

Its function is as follows. This is one of the proteins that binds to the 5S RNA in the ribosome where it forms part of the central protuberance. This is Large ribosomal subunit protein bL25 from Chloroherpeton thalassium (strain ATCC 35110 / GB-78).